The sequence spans 382 residues: Anhydro-N-acetylmuramic acid kinase (382 aa).

Gly-9–Asp-16 contributes to the ATP binding site.

It belongs to the anhydro-N-acetylmuramic acid kinase family.

It carries out the reaction 1,6-anhydro-N-acetyl-beta-muramate + ATP + H2O = N-acetyl-D-muramate 6-phosphate + ADP + H(+). The protein operates within amino-sugar metabolism; 1,6-anhydro-N-acetylmuramate degradation. Its pathway is cell wall biogenesis; peptidoglycan recycling. Functionally, catalyzes the specific phosphorylation of 1,6-anhydro-N-acetylmuramic acid (anhMurNAc) with the simultaneous cleavage of the 1,6-anhydro ring, generating MurNAc-6-P. Is required for the utilization of anhMurNAc either imported from the medium or derived from its own cell wall murein, and thus plays a role in cell wall recycling. In Bacillus cereus (strain G9842), this protein is Anhydro-N-acetylmuramic acid kinase.